Reading from the N-terminus, the 272-residue chain is NH(3)-dependent NAD(+) synthetase (272 aa).

45-52 (GISGGQDS) contributes to the ATP binding site. Mg(2+) is bound at residue Asp51. Deamido-NAD(+) is bound at residue Arg138. Thr158 is a binding site for ATP. Residue Glu163 coordinates Mg(2+). 2 residues coordinate deamido-NAD(+): Lys171 and Asp178. ATP-binding residues include Lys187 and Thr209. Residue 258-259 (HK) participates in deamido-NAD(+) binding.

The protein belongs to the NAD synthetase family. Homodimer.

The catalysed reaction is deamido-NAD(+) + NH4(+) + ATP = AMP + diphosphate + NAD(+) + H(+). It functions in the pathway cofactor biosynthesis; NAD(+) biosynthesis; NAD(+) from deamido-NAD(+) (ammonia route): step 1/1. In terms of biological role, catalyzes the ATP-dependent amidation of deamido-NAD to form NAD. Uses ammonia as a nitrogen source. This is NH(3)-dependent NAD(+) synthetase from Bacillus cereus (strain ATCC 10987 / NRS 248).